We begin with the raw amino-acid sequence, 594 residues long: NADH-ubiquinone oxidoreductase chain 5 (594 aa).

15 helical membrane-spanning segments follow: residues 1–21 (MNLF…PIMM), 43–63 (AFLI…EMII), 87–107 (IVFA…SMWY), 114–134 (INQF…LVTA), 137–157 (LFQL…LIGW), 171–191 (AILY…WFLS), 211–233 (LPLM…HPWL), 241–261 (TPVS…FLLI), 272–292 (LMQT…AMCA), 301–320 (IIAF…IGIN), 325–347 (AFLH…GSII), 366–386 (MPFT…VPFL), 409–429 (LLIT…IIFF), 457–477 (LMAG…PMTT), and 486–506 (LKMT…EITL).

Belongs to the complex I subunit 5 family. Core subunit of respiratory chain NADH dehydrogenase (Complex I) which is composed of 45 different subunits.

It localises to the mitochondrion inner membrane. The catalysed reaction is a ubiquinone + NADH + 5 H(+)(in) = a ubiquinol + NAD(+) + 4 H(+)(out). Functionally, core subunit of the mitochondrial membrane respiratory chain NADH dehydrogenase (Complex I) which catalyzes electron transfer from NADH through the respiratory chain, using ubiquinone as an electron acceptor. Essential for the catalytic activity and assembly of complex I. The polypeptide is NADH-ubiquinone oxidoreductase chain 5 (MT-ND5) (Hippopotamus amphibius (Hippopotamus)).